Consider the following 90-residue polypeptide: Small ribosomal subunit protein uS19 (90 aa).

This sequence belongs to the universal ribosomal protein uS19 family.

Protein S19 forms a complex with S13 that binds strongly to the 16S ribosomal RNA. This is Small ribosomal subunit protein uS19 from Hydrogenovibrio crunogenus (strain DSM 25203 / XCL-2) (Thiomicrospira crunogena).